Consider the following 1152-residue polypeptide: DNA-directed RNA polymerase subunit beta (1152 aa).

This sequence belongs to the RNA polymerase beta chain family. As to quaternary structure, the RNAP catalytic core consists of 2 alpha, 1 beta, 1 beta' and 1 omega subunit. When a sigma factor is associated with the core the holoenzyme is formed, which can initiate transcription.

The enzyme catalyses RNA(n) + a ribonucleoside 5'-triphosphate = RNA(n+1) + diphosphate. Its function is as follows. DNA-dependent RNA polymerase catalyzes the transcription of DNA into RNA using the four ribonucleoside triphosphates as substrates. The chain is DNA-directed RNA polymerase subunit beta from Deinococcus geothermalis (strain DSM 11300 / CIP 105573 / AG-3a).